We begin with the raw amino-acid sequence, 127 residues long: UPF0212 protein VNG_1264C (127 aa).

This sequence belongs to the UPF0212 family.

In Halobacterium salinarum (strain ATCC 700922 / JCM 11081 / NRC-1) (Halobacterium halobium), this protein is UPF0212 protein VNG_1264C.